The following is a 374-amino-acid chain: Putative phosphoserine aminotransferase (374 aa).

Arginine 48 contacts L-glutamate. Pyridoxal 5'-phosphate is bound by residues 82–83 (AT), phenylalanine 106, threonine 152, aspartate 174, and glutamine 197. Lysine 198 bears the N6-(pyridoxal phosphate)lysine mark. Residue 249-250 (NT) coordinates pyridoxal 5'-phosphate.

Belongs to the class-V pyridoxal-phosphate-dependent aminotransferase family. SerC subfamily. As to quaternary structure, homodimer. The cofactor is pyridoxal 5'-phosphate.

It is found in the cytoplasm. The enzyme catalyses O-phospho-L-serine + 2-oxoglutarate = 3-phosphooxypyruvate + L-glutamate. It catalyses the reaction 4-(phosphooxy)-L-threonine + 2-oxoglutarate = (R)-3-hydroxy-2-oxo-4-phosphooxybutanoate + L-glutamate. Its pathway is amino-acid biosynthesis; L-serine biosynthesis; L-serine from 3-phospho-D-glycerate: step 2/3. The protein operates within cofactor biosynthesis; pyridoxine 5'-phosphate biosynthesis; pyridoxine 5'-phosphate from D-erythrose 4-phosphate: step 3/5. Functionally, catalyzes the reversible conversion of 3-phosphohydroxypyruvate to phosphoserine and of 3-hydroxy-2-oxo-4-phosphonooxybutanoate to phosphohydroxythreonine. This chain is Putative phosphoserine aminotransferase, found in Mycolicibacterium paratuberculosis (strain ATCC BAA-968 / K-10) (Mycobacterium paratuberculosis).